The chain runs to 466 residues: 23S rRNA (uracil(1939)-C(5))-methyltransferase RlmD (466 aa).

Residues 1-22 form a disordered region; that stretch reads MSSQPNPTSHPEAASAASAASN. Residues 17–81 enclose the TRAM domain; it reads ASAASNDPVV…PSYEQAHLVE (65 aa). [4Fe-4S] cluster is bound by residues cysteine 94, cysteine 100, cysteine 103, and cysteine 182. S-adenosyl-L-methionine is bound by residues glutamine 290, phenylalanine 319, asparagine 324, glutamate 340, asparagine 368, and aspartate 389. Cysteine 422 acts as the Nucleophile in catalysis.

The protein belongs to the class I-like SAM-binding methyltransferase superfamily. RNA M5U methyltransferase family. RlmD subfamily.

It catalyses the reaction uridine(1939) in 23S rRNA + S-adenosyl-L-methionine = 5-methyluridine(1939) in 23S rRNA + S-adenosyl-L-homocysteine + H(+). Functionally, catalyzes the formation of 5-methyl-uridine at position 1939 (m5U1939) in 23S rRNA. The protein is 23S rRNA (uracil(1939)-C(5))-methyltransferase RlmD of Cupriavidus metallidurans (strain ATCC 43123 / DSM 2839 / NBRC 102507 / CH34) (Ralstonia metallidurans).